Here is a 293-residue protein sequence, read N- to C-terminus: Urease accessory protein UreD 2 (293 aa).

This sequence belongs to the UreD family. UreD, UreF and UreG form a complex that acts as a GTP-hydrolysis-dependent molecular chaperone, activating the urease apoprotein by helping to assemble the nickel containing metallocenter of UreC. The UreE protein probably delivers the nickel.

It is found in the cytoplasm. Its function is as follows. Required for maturation of urease via the functional incorporation of the urease nickel metallocenter. This Streptomyces griseus subsp. griseus (strain JCM 4626 / CBS 651.72 / NBRC 13350 / KCC S-0626 / ISP 5235) protein is Urease accessory protein UreD 2.